The chain runs to 246 residues: Probable transcriptional regulatory protein BVU_3469 (246 aa).

Belongs to the TACO1 family.

It is found in the cytoplasm. The sequence is that of Probable transcriptional regulatory protein BVU_3469 from Phocaeicola vulgatus (strain ATCC 8482 / DSM 1447 / JCM 5826 / CCUG 4940 / NBRC 14291 / NCTC 11154) (Bacteroides vulgatus).